A 370-amino-acid chain; its full sequence is Peptidyl-prolyl cis-trans isomerase D (370 aa).

S5 bears the Phosphoserine mark. The PPIase cyclophilin-type domain maps to 19–183 (FFDVDIGGER…KLCVIAECGE (165 aa)). K171 carries the N6-acetyllysine modification. The chaperone activity stretch occupies residues 185–215 (KEGDDWGIFPKDGSGDSHPDFPEDADVDLKD). A Phosphoserine modification is found at S198. The interval 214-370 (KDVDKILLIS…EKAAYAKMFA (157 aa)) is interaction with HSP90AB1. 3 TPR repeats span residues 223 to 256 (SEDLKNIGNTFFKSQNWEMAIKKYTKVLRYVEGS), 273 to 306 (LSCVLNIGACKLKMSDWQGAVDSCLEALEIDPSN), and 307 to 340 (TKALYRRAQGWQGLKEYDQALADLKKAQEIAPED).

This sequence belongs to the cyclophilin-type PPIase family. PPIase D subfamily. In terms of assembly, identified in ESR1 or NR3C1/GCR steroid receptor-chaperone complexes. Found in HSP90 chaperone complexes with kinase clients LCK or EIF2AK1. Two monomers associate with one HSP90 homodimer. Interacts with HSP90AA1. Interacts with HSP90AB1; PPID and FKBP4 compete for binding to HSP90AB1 and the interaction is mutually exclusive with the PPID:HSPA8 interaction. Interacts with HSPA8; PPID and STIP1 but not FKBP4 compete for binding to HSPA8 and the interaction is mutually exclusive with the PPID:HSP90AB1 interaction. Interacts with S100A1 and S100A2; the interactions dissociate the PPID:HSP90AA1 interaction. Interacts with S100A6. Interacts with MYB, ILF2, XRCC6, RACK1 and RPS3. Interacts with cytoplasmic dynein 1 intermediate chain (DYNC1I1 or DYNC1I2). The N-terminus is blocked. Detected in heart, thymis and brain.

It is found in the cytoplasm. The protein resides in the nucleus. Its subcellular location is the nucleolus. It localises to the nucleoplasm. It carries out the reaction [protein]-peptidylproline (omega=180) = [protein]-peptidylproline (omega=0). Its activity is regulated as follows. Less sensitive to inhibition by cyclosporin A than is CYP-18. PPIase that catalyzes the cis-trans isomerization of proline imidic peptide bonds in oligopeptides and may therefore assist protein folding. Proposed to act as a co-chaperone in HSP90 complexes such as in unligated steroid receptors heterocomplexes. Different co-chaperones seem to compete for association with HSP90 thus establishing distinct HSP90-co-chaperone-receptor complexes with the potential to exert tissue-specific receptor activity control. May have a preference for estrogen receptor complexes and is not found in glucocorticoid receptor complexes. May be involved in cytoplasmic dynein-dependent movement of the receptor from the cytoplasm to the nucleus. May regulate MYB by inhibiting its DNA-binding activity. Involved in regulation of AHR signaling by promoting the formation of the AHR:ARNT dimer; the function is independent of HSP90 but requires the chaperone activity. Involved in regulation of UV radiation-induced apoptosis. The sequence is that of Peptidyl-prolyl cis-trans isomerase D from Bos taurus (Bovine).